A 139-amino-acid chain; its full sequence is Transcription antitermination protein NusB (139 aa).

The protein belongs to the NusB family.

Functionally, involved in transcription antitermination. Required for transcription of ribosomal RNA (rRNA) genes. Binds specifically to the boxA antiterminator sequence of the ribosomal RNA (rrn) operons. The sequence is that of Transcription antitermination protein NusB from Lactiplantibacillus plantarum (strain ATCC BAA-793 / NCIMB 8826 / WCFS1) (Lactobacillus plantarum).